The sequence spans 278 residues: Cysteine-rich repeat secretory protein 18 (278 aa).

The signal sequence occupies residues 1–32; it reads MYSSSSVSKRFVLVPIVVVVTTQLLLVRNVSS. 2 consecutive Gnk2-homologous domains span residues 39 to 147 and 160 to 267; these read YLHH…SLDT and PSAK…LYPF.

This sequence belongs to the cysteine-rich repeat secretory protein family.

The protein localises to the secreted. The sequence is that of Cysteine-rich repeat secretory protein 18 (CRRSP18) from Arabidopsis thaliana (Mouse-ear cress).